The primary structure comprises 1106 residues: Carbamoyl phosphate synthase large chain (1106 aa).

Residues 1–402 (MPRREDIRSV…SFQKALRSLE (402 aa)) form a carboxyphosphate synthetic domain region. Arg-129, Arg-169, Gly-175, Gly-176, Glu-208, Val-210, Glu-215, Gly-241, Val-242, His-243, Gln-285, and Glu-299 together coordinate ATP. The region spanning 133 to 328 (KKAMEKIGVR…IAKIAALLSI (196 aa)) is the ATP-grasp 1 domain. 3 residues coordinate Mg(2+): Gln-285, Glu-299, and Asn-301. Residues Gln-285, Glu-299, and Asn-301 each contribute to the Mn(2+) site. Positions 403–582 (IDRYGFGSDG…YSSYDEEDES (180 aa)) are oligomerization domain. Residues 583–964 (DVTNAKSVMI…AFLKSQYMAG (382 aa)) are carbamoyl phosphate synthetic domain. The 192-residue stretch at 707 to 898 (VEVLEKLKLN…IVKYATRIMM (192 aa)) folds into the ATP-grasp 2 domain. ATP is bound by residues Arg-743, Ser-782, Leu-784, Glu-789, Gly-814, Ile-815, His-816, Ser-817, Gln-857, and Glu-869. Mg(2+)-binding residues include Gln-857, Glu-869, and Asn-871. Mn(2+)-binding residues include Gln-857, Glu-869, and Asn-871. The region spanning 965 to 1106 (DELPSQGTVF…QEIHAMPKIL (142 aa)) is the MGS-like domain. The tract at residues 965–1106 (DELPSQGTVF…QEIHAMPKIL (142 aa)) is allosteric domain.

It belongs to the CarB family. In terms of assembly, composed of two chains; the small (or glutamine) chain promotes the hydrolysis of glutamine to ammonia, which is used by the large (or ammonia) chain to synthesize carbamoyl phosphate. Tetramer of heterodimers (alpha,beta)4. Mg(2+) is required as a cofactor. It depends on Mn(2+) as a cofactor.

It carries out the reaction hydrogencarbonate + L-glutamine + 2 ATP + H2O = carbamoyl phosphate + L-glutamate + 2 ADP + phosphate + 2 H(+). The catalysed reaction is hydrogencarbonate + NH4(+) + 2 ATP = carbamoyl phosphate + 2 ADP + phosphate + 2 H(+). Its pathway is amino-acid biosynthesis; L-arginine biosynthesis; carbamoyl phosphate from bicarbonate: step 1/1. The protein operates within pyrimidine metabolism; UMP biosynthesis via de novo pathway; (S)-dihydroorotate from bicarbonate: step 1/3. Its function is as follows. Large subunit of the glutamine-dependent carbamoyl phosphate synthetase (CPSase). CPSase catalyzes the formation of carbamoyl phosphate from the ammonia moiety of glutamine, carbonate, and phosphate donated by ATP, constituting the first step of 2 biosynthetic pathways, one leading to arginine and/or urea and the other to pyrimidine nucleotides. The large subunit (synthetase) binds the substrates ammonia (free or transferred from glutamine from the small subunit), hydrogencarbonate and ATP and carries out an ATP-coupled ligase reaction, activating hydrogencarbonate by forming carboxy phosphate which reacts with ammonia to form carbamoyl phosphate. In Leptospira interrogans serogroup Icterohaemorrhagiae serovar copenhageni (strain Fiocruz L1-130), this protein is Carbamoyl phosphate synthase large chain.